A 324-amino-acid chain; its full sequence is Cuticle collagen lon-3 (324 aa).

A signal peptide spans 1–30 (MSVTTATSGALIFSGASLLVSLFAAASIYS). The tract at residues 119-324 (VENTCPTGPD…AWRRKHKRVY (206 aa)) is disordered. Triple-helical region stretches follow at residues 129-152 (GEEGEQGPDGQDGVDGVPGFDGQD), 170-229 (GLPG…KGDD), and 235-294 (GRQG…SGLP). Low complexity-rich tracts occupy residues 136-151 (PDGQDGVDGVPGFDGQ), 168-181 (PQGLPGPQGSQGAP), 210-223 (PTGAPGDDGAPGAS), 235-246 (GRQGQRGQPGEQ), and 261-273 (EGPPGVEGEVGVP). A compositionally biased stretch (basic and acidic residues) spans 296-311 (KDAEYCKCPTRDDGGN). Over residues 314–324 (RAWRRKHKRVY) the composition is skewed to basic residues.

The protein belongs to the cuticular collagen family. In terms of assembly, collagen polypeptide chains are complexed within the cuticle by disulfide bonds and other types of covalent cross-links.

Nematode cuticles are composed largely of collagen-like proteins. The cuticle functions both as an exoskeleton and as a barrier to protect the worm from its environment. Dose-dependent regulator of body length and shape. This chain is Cuticle collagen lon-3 (lon-3), found in Caenorhabditis elegans.